A 111-amino-acid chain; its full sequence is Large ribosomal subunit protein uL22 (111 aa).

The protein belongs to the universal ribosomal protein uL22 family. As to quaternary structure, part of the 50S ribosomal subunit.

Its function is as follows. This protein binds specifically to 23S rRNA; its binding is stimulated by other ribosomal proteins, e.g. L4, L17, and L20. It is important during the early stages of 50S assembly. It makes multiple contacts with different domains of the 23S rRNA in the assembled 50S subunit and ribosome. In terms of biological role, the globular domain of the protein is located near the polypeptide exit tunnel on the outside of the subunit, while an extended beta-hairpin is found that lines the wall of the exit tunnel in the center of the 70S ribosome. This is Large ribosomal subunit protein uL22 from Xanthomonas oryzae pv. oryzae (strain PXO99A).